Consider the following 175-residue polypeptide: Putative lipoprotein LppN (175 aa).

An N-terminal signal peptide occupies residues 1–20; it reads MRLPGRHVLYALSAVTMLAA. Cys-21 carries the N-palmitoyl cysteine lipid modification. Cys-21 is lipidated: S-diacylglycerol cysteine. Positions 31 to 56 are disordered; it reads ASTNMNPTNPPATAETATVSPTPAPQ. A compositionally biased stretch (low complexity) spans 33-48; sequence TNMNPTNPPATAETAT.

It localises to the cell membrane. The chain is Putative lipoprotein LppN (lppN) from Mycobacterium bovis (strain ATCC BAA-935 / AF2122/97).